A 688-amino-acid chain; its full sequence is Polyribonucleotide nucleotidyltransferase (688 aa).

Residues Asp484 and Asp490 each contribute to the Mg(2+) site. The KH domain maps to 550-609; it reads PTTEIFNVAPDKIVEIIGQGGRVIKEIVEKFEVKIDLNKPSGEVKIMGNKERVLKTKEFI. One can recognise an S1 motif domain in the interval 626 to 688; sequence DEVLEAQVKR…NKGKIALDLA (63 aa).

The protein belongs to the polyribonucleotide nucleotidyltransferase family. It depends on Mg(2+) as a cofactor.

It is found in the cytoplasm. It catalyses the reaction RNA(n+1) + phosphate = RNA(n) + a ribonucleoside 5'-diphosphate. Its function is as follows. Involved in mRNA degradation. Catalyzes the phosphorolysis of single-stranded polyribonucleotides processively in the 3'- to 5'-direction. The chain is Polyribonucleotide nucleotidyltransferase from Helicobacter pylori (strain G27).